Here is a 311-residue protein sequence, read N- to C-terminus: Pyrimidine-specific ribonucleoside hydrolase RihA (311 aa).

His-240 is a catalytic residue.

This sequence belongs to the IUNH family. RihA subfamily.

In terms of biological role, hydrolyzes cytidine or uridine to ribose and cytosine or uracil, respectively. In Salmonella paratyphi B (strain ATCC BAA-1250 / SPB7), this protein is Pyrimidine-specific ribonucleoside hydrolase RihA.